A 743-amino-acid polypeptide reads, in one-letter code: Cytosolic neutral trehalase (743 aa).

Ca(2+) contacts are provided by D95, D97, N99, Q101, and D106. Residues R285, 292 to 293 (WD), N329, 338 to 340 (RSQ), E405, R454, and G457 contribute to the substrate site. Active-site proton donor/acceptor residues include D459 and E664.

Belongs to the glycosyl hydrolase 37 family. The cofactor is Ca(2+).

It is found in the cytoplasm. It carries out the reaction alpha,alpha-trehalose + H2O = alpha-D-glucose + beta-D-glucose. It participates in carbohydrate degradation. In terms of biological role, hydrolyzes intracellular trehalose to glucose. This Beauveria bassiana (strain ARSEF 2860) (White muscardine disease fungus) protein is Cytosolic neutral trehalase.